We begin with the raw amino-acid sequence, 445 residues long: MVKKPISSSDEVFKFEIPSSPKSSAGASHSSTDSPSSVFLSSEAENGVEDRKRFSKSPTAQSPTSSVEAESPDQKRSLGLWSKSSFDGSNLLSDKNDCKTESKADSKTERKKSSSSSQYKANMHFHKLFLDVPTEEPLRQSFTCALQKEILYQGKLFVSENWICFHSKVFGKDTKISIPAFSVTLIKKTKTALLVPNALIIATVTDRYIFVSLLSRDSTYKLLKSICGHLENTSVGNSPNPSSAENSFRADRPSSLRLDFNDEFSDLDGVVQQRRQDLEGYSSSGSQTPESENSRDFHVTESQTVLNVTKGETKPPRTDAHGSRAPDGKAKILPAHGQSETIGILHKMESRKCPTLRHILIFYAIIVCALIISTFYMRYRINTLEERLGSLTSIMDPHSTEQTAPSSLGSQVQLNVEVLCQELTANIVTLEKIQNNLQKLLENGD.

The residue at position 1 (M1) is an N-acetylmethionine. A compositionally biased stretch (polar residues) spans 1-10; that stretch reads MVKKPISSSD. The disordered stretch occupies residues 1–119; sequence MVKKPISSSD…RKKSSSSSQY (119 aa). Positions 18-37 are enriched in low complexity; that stretch reads PSSPKSSAGASHSSTDSPSS. Composition is skewed to polar residues over residues 56–68 and 82–93; these read KSPT…SSVE and SKSSFDGSNLLS. The segment covering 94-112 has biased composition (basic and acidic residues); the sequence is DKNDCKTESKADSKTERKK. The GRAM domain occupies 123-190; the sequence is MHFHKLFLDV…FSVTLIKKTK (68 aa). Phosphoserine is present on residues S238, S255, and S265. Residues 277–331 are disordered; it reads DLEGYSSSGSQTPESENSRDFHVTESQTVLNVTKGETKPPRTDAHGSRAPDGKAK. A compositionally biased stretch (polar residues) spans 281–291; sequence YSSSGSQTPES. A compositionally biased stretch (basic and acidic residues) spans 311–330; sequence GETKPPRTDAHGSRAPDGKA.

This is GRAM domain-containing protein 2B (Gramd2b) from Rattus norvegicus (Rat).